A 506-amino-acid chain; its full sequence is Cobyric acid synthase (506 aa).

A GATase cobBQ-type domain is found at 254-453; that stretch reads DLDIAVIRLP…IHGIFESDSF (200 aa). Cys334 (nucleophile) is an active-site residue. The active site involves His445.

Belongs to the CobB/CobQ family. CobQ subfamily.

It participates in cofactor biosynthesis; adenosylcobalamin biosynthesis. Functionally, catalyzes amidations at positions B, D, E, and G on adenosylcobyrinic A,C-diamide. NH(2) groups are provided by glutamine, and one molecule of ATP is hydrogenolyzed for each amidation. The sequence is that of Cobyric acid synthase from Dehalococcoides mccartyi (strain ATCC BAA-2266 / KCTC 15142 / 195) (Dehalococcoides ethenogenes (strain 195)).